The primary structure comprises 318 residues: Biotin synthase (318 aa).

Residues 44 to 270 form the Radical SAM core domain; that stretch reads LCGDAVNLCS…INPTANIRLA (227 aa). [4Fe-4S] cluster contacts are provided by C62, C66, and C69. Positions 106, 138, 198, and 268 each coordinate [2Fe-2S] cluster.

It belongs to the radical SAM superfamily. Biotin synthase family. Homodimer. It depends on [4Fe-4S] cluster as a cofactor. Requires [2Fe-2S] cluster as cofactor.

It catalyses the reaction (4R,5S)-dethiobiotin + (sulfur carrier)-SH + 2 reduced [2Fe-2S]-[ferredoxin] + 2 S-adenosyl-L-methionine = (sulfur carrier)-H + biotin + 2 5'-deoxyadenosine + 2 L-methionine + 2 oxidized [2Fe-2S]-[ferredoxin]. Its pathway is cofactor biosynthesis; biotin biosynthesis; biotin from 7,8-diaminononanoate: step 2/2. Catalyzes the conversion of dethiobiotin (DTB) to biotin by the insertion of a sulfur atom into dethiobiotin via a radical-based mechanism. This chain is Biotin synthase, found in Alkaliphilus metalliredigens (strain QYMF).